A 166-amino-acid chain; its full sequence is Large ribosomal subunit protein uL10 (166 aa).

It belongs to the universal ribosomal protein uL10 family. In terms of assembly, part of the ribosomal stalk of the 50S ribosomal subunit. The N-terminus interacts with L11 and the large rRNA to form the base of the stalk. The C-terminus forms an elongated spine to which L12 dimers bind in a sequential fashion forming a multimeric L10(L12)X complex.

In terms of biological role, forms part of the ribosomal stalk, playing a central role in the interaction of the ribosome with GTP-bound translation factors. This is Large ribosomal subunit protein uL10 from Shewanella woodyi (strain ATCC 51908 / MS32).